Reading from the N-terminus, the 433-residue chain is Oxaloacetate decarboxylase beta chain 2 (433 aa).

Transmembrane regions (helical) follow at residues 16 to 36 (LGAG…LAIA), 42 to 62 (LLLL…AGMA), 122 to 142 (VLAL…VIFM), 168 to 188 (FGIF…LIAF), 190 to 210 (LPQA…AIYL), 216 to 236 (PELL…VPLI), 266 to 286 (ILFP…AAPL), 311 to 331 (NGLI…KLVA), 340 to 360 (LGIL…GVLM), and 413 to 433 (VAGV…VLAM).

Belongs to the GcdB/MmdB/OadB family. In terms of assembly, heterotrimer of an alpha, a beta and a gamma subunit. The cofactor is Na(+).

The protein resides in the cell membrane. It carries out the reaction oxaloacetate + 2 Na(+)(in) + H(+) = pyruvate + 2 Na(+)(out) + CO2. Catalyzes the decarboxylation of oxaloacetate coupled to Na(+) translocation. This chain is Oxaloacetate decarboxylase beta chain 2 (oadB2), found in Salmonella typhi.